The chain runs to 216 residues: GTP cyclohydrolase 1 (216 aa).

The segment at 1–33 (MPQARGEGATPPTSLPNPSLKGVPLPDNPNNLE) is disordered. Residues 24 to 33 (PLPDNPNNLE) show a composition bias toward low complexity. Positions 102, 105, and 173 each coordinate Zn(2+).

This sequence belongs to the GTP cyclohydrolase I family. As to quaternary structure, toroid-shaped homodecamer, composed of two pentamers of five dimers.

It carries out the reaction GTP + H2O = 7,8-dihydroneopterin 3'-triphosphate + formate + H(+). It functions in the pathway cofactor biosynthesis; 7,8-dihydroneopterin triphosphate biosynthesis; 7,8-dihydroneopterin triphosphate from GTP: step 1/1. This chain is GTP cyclohydrolase 1 (folE), found in Deinococcus radiodurans (strain ATCC 13939 / DSM 20539 / JCM 16871 / CCUG 27074 / LMG 4051 / NBRC 15346 / NCIMB 9279 / VKM B-1422 / R1).